Here is a 290-residue protein sequence, read N- to C-terminus: 33 kDa chaperonin (290 aa).

2 cysteine pairs are disulfide-bonded: cysteine 235-cysteine 237 and cysteine 268-cysteine 271.

Belongs to the HSP33 family. In terms of processing, under oxidizing conditions two disulfide bonds are formed involving the reactive cysteines. Under reducing conditions zinc is bound to the reactive cysteines and the protein is inactive.

The protein localises to the cytoplasm. Its function is as follows. Redox regulated molecular chaperone. Protects both thermally unfolding and oxidatively damaged proteins from irreversible aggregation. Plays an important role in the bacterial defense system toward oxidative stress. The polypeptide is 33 kDa chaperonin (Streptococcus uberis (strain ATCC BAA-854 / 0140J)).